Consider the following 722-residue polypeptide: MSFVVGVGGSGSGSGGDGGGSHHHDGSETDRKKKRYHRHTAQQIQRLESSFKECPHPDEKQRNQLSRELGLAPRQIKFWFQNRRTQLKAQHERADNSALKAENDKIRCENIAIREALKHAICPNCGGPPVSEDPYFDEQKLRIENAHLREELERMSTIASKYMGRPISQLSTLHPMHISPLDLSMTSLTGCGPFGHGPSLDFDLLPGSSMAVGPNNNLQSQPNLAISDMDKPIMTGIALTAMEELLRLLQTNEPLWTRTDGCRDILNLGSYENVFPRSSNRGKNQNFRVEASRSSGIVFMNAMALVDMFMDCVKWTELFPSIIAASKTLAVISSGMGGTHEGALHLLYEEMEVLSPLVATREFCELRYCQQTEQGSWIVVNVSYDLPQFVSHSQSYRFPSGCLIQDMPNGYSKVTWVEHIETEEKELVHELYREIIHRGIAFGADRWVTTLQRMCERFASLSVPASSSRDLGGVILSPEGKRSMMRLAQRMISNYCLSVSRSNNTRSTVVSELNEVGIRVTAHKSPEPNGTVLCAATTFWLPNSPQNVFNFLKDERTRPQWDVLSNGNAVQEVAHISNGSHPGNCISVLRGSNATHSNNMLILQESSTDSSGAFVVYSPVDLAALNIAMSGEDPSYIPLLSSGFTISPDGNGSNSEQGGASTSSGRASASGSLITVGFQIMVSNLPTAKLNMESVETVNNLIGTTVHQIKTALSGPTASTTA.

Gly residues predominate over residues 1-19 (MSFVVGVGGSGSGSGGDGG). A disordered region spans residues 1 to 42 (MSFVVGVGGSGSGSGGDGGGSHHHDGSETDRKKKRYHRHTAQ). Residues 20–31 (GSHHHDGSETDR) are compositionally biased toward basic and acidic residues. A DNA-binding region (homeobox) is located at residues 32–91 (KKKRYHRHTAQQIQRLESSFKECPHPDEKQRNQLSRELGLAPRQIKFWFQNRRTQLKAQH). Positions 81-161 (QNRRTQLKAQ…LERMSTIASK (81 aa)) form a coiled coil. The region spanning 227 to 460 (SDMDKPIMTG…LQRMCERFAS (234 aa)) is the START domain.

This sequence belongs to the HD-ZIP homeobox family. Class IV subfamily. In terms of assembly, interacts with BBM. Expressed in apical meristems and young epidermal tissue including trichomes and stipules. Expressed in lateral root tips, the L1 layer of apical inflorescence meristems and early flower primordia, carpel and petal epidermis, stigma papillae, ovule primordia, nucellus and embryo.

The protein localises to the nucleus. Transcription factor which acts as a positive regulator of drought stress tolerance. Can transactivate CIPK3, NCED3 and ERECTA. Transactivates several cell-wall-loosening protein genes by directly binding to HD motifs in their promoters. These target genes play important roles in coordinating cell-wall extensibility with root development and growth. Transactivates CYP74A/AOS, AOC3, OPR3 and 4CLL5/OPCL1 genes by directly binding to HD motifs in their promoters. These target genes are involved in jasmonate (JA) biosynthesis, and JA signaling affects root architecture by activating auxin signaling, which promotes lateral root formation. Acts as a negative regulator of trichome branching. Required for the establishment of giant cell identity on the abaxial side of sepals. Seems to promote cell differentiation. May regulate cell differentiation and proliferation during root and shoot meristem development. This is Homeobox-leucine zipper protein HDG11 from Arabidopsis thaliana (Mouse-ear cress).